A 443-amino-acid chain; its full sequence is 26S proteasome regulatory subunit 4 homolog B (443 aa).

Disordered stretches follow at residues 1–55 (MGQG…LPTV) and 87–108 (RLKP…LRGT). Basic and acidic residues-rich tracts occupy residues 12–28 (QGDR…KKFE) and 87–106 (RLKP…DDLR). 229–236 (GEPGTGKT) contributes to the ATP binding site. Residues Lys-296 and Lys-433 each participate in a glycyl lysine isopeptide (Lys-Gly) (interchain with G-Cter in ubiquitin) cross-link.

Belongs to the AAA ATPase family. As to quaternary structure, component of the 19S regulatory particle (RP/PA700) base subcomplex of the 26S proteasome. The 26S proteasome is composed of a core protease (CP), known as the 20S proteasome, capped at one or both ends by the 19S regulatory particle (RP/PA700). The RP/PA700 complex is composed of at least 17 different subunits in two subcomplexes, the base and the lid, which form the portions proximal and distal to the 20S proteolytic core, respectively. In terms of tissue distribution, preferentially expressed in the root and shoot apical meristem.

Its subcellular location is the cytoplasm. The protein localises to the nucleus. In terms of biological role, the 26S protease is involved in the ATP-dependent degradation of ubiquitinated proteins. The regulatory (or ATPase) complex confers ATP dependency and substrate specificity to the 26S complex. Acts redundantly with RPT2A in the regulation of gametogenesis. With RPT2A plays a critical role in 26S proteasome assembly. This Arabidopsis thaliana (Mouse-ear cress) protein is 26S proteasome regulatory subunit 4 homolog B.